The primary structure comprises 208 residues: Large ribosomal subunit protein bL25 (208 aa).

The span at 186–201 shows a compositional bias: low complexity; sequence PAGEKSAAAEEGAAAA. The disordered stretch occupies residues 186 to 208; that stretch reads PAGEKSAAAEEGAAAAGEDKPAA.

Belongs to the bacterial ribosomal protein bL25 family. CTC subfamily. As to quaternary structure, part of the 50S ribosomal subunit; part of the 5S rRNA/L5/L18/L25 subcomplex. Contacts the 5S rRNA. Binds to the 5S rRNA independently of L5 and L18.

This is one of the proteins that binds to the 5S RNA in the ribosome where it forms part of the central protuberance. This is Large ribosomal subunit protein bL25 from Ralstonia pickettii (strain 12J).